The chain runs to 206 residues: MKIVIASSHGYKIRETKTFLKQLGSFDIFSLTDFPNYYAPKEVGSLPEENALAKGLHAARELNSWVIADDTMLMVPALNGLPGKLSATFAGEDACDKDHRKKLLQEMQSLESIVDRSAYFECCIVLASPEGKFFKTRGICEGYISHQEKGSSGFGYDSLFLKYDYKQTFAELSEDIKNQVSHRAKALQKLAPYLQDLLEKQLVSRN.

Residue 7–12 (SSHGYK) coordinates substrate. Aspartate 70 acts as the Proton acceptor in catalysis. Aspartate 70 lines the Mg(2+) pocket. Substrate contacts are provided by residues threonine 71, 154 to 157 (FGYD), lysine 177, and 182 to 183 (HR).

This sequence belongs to the HAM1 NTPase family. In terms of assembly, homodimer. Mg(2+) is required as a cofactor.

It carries out the reaction XTP + H2O = XMP + diphosphate + H(+). The catalysed reaction is dITP + H2O = dIMP + diphosphate + H(+). The enzyme catalyses ITP + H2O = IMP + diphosphate + H(+). In terms of biological role, pyrophosphatase that catalyzes the hydrolysis of nucleoside triphosphates to their monophosphate derivatives, with a high preference for the non-canonical purine nucleotides XTP (xanthosine triphosphate), dITP (deoxyinosine triphosphate) and ITP. Seems to function as a house-cleaning enzyme that removes non-canonical purine nucleotides from the nucleotide pool, thus preventing their incorporation into DNA/RNA and avoiding chromosomal lesions. This Chlamydia abortus (strain DSM 27085 / S26/3) (Chlamydophila abortus) protein is dITP/XTP pyrophosphatase.